The chain runs to 395 residues: Phosphoprotein (395 aa).

2 disordered regions span residues V31 to L109 and N126 to V214. Residues T65–K74 show a composition bias toward basic and acidic residues. 3 stretches are compositionally biased toward polar residues: residues Q75–T98, L146–A168, and S203–A212. The tract at residues D222–G285 is multimerization.

The protein belongs to the rubulavirus/avulavirus P protein family. As to quaternary structure, homotetramer. Interacts (via multimerization domain) with polymerase L; this interaction forms the polymerase L-P complex. Interacts (via N-terminus) with N0 (via Ncore); this interaction allows P to chaperon N0 to avoid N polymerization before encapsidation. Interacts (via C-terminus) with N-RNA template; this interaction positions the polymerase on the template for both transcription and replication.

In terms of biological role, essential cofactor of the RNA polymerase L that plays a central role in the transcription and replication by forming the polymerase complex with RNA polymerase L and recruiting L to the genomic N-RNA template for RNA synthesis. Also plays a central role in the encapsidation of nascent RNA chains by forming the encapsidation complex with the nucleocapsid protein N (N-P complex). Acts as a chaperone for newly synthesized free N protein, so-called N0, allowing encapsidation of nascent RNA chains during replication. The nucleoprotein protein N prevents excessive phosphorylation of P, which leads to down-regulation of viral transcription/ replication. Participates, together with N, in the formation of viral factories (viroplasms), which are large inclusions in the host cytoplasm where replication takes place. The sequence is that of Phosphoprotein (P/C) from Gallus gallus (Chicken).